The sequence spans 203 residues: Urease accessory protein UreG (203 aa).

Residue Gly11–Thr18 participates in GTP binding.

This sequence belongs to the SIMIBI class G3E GTPase family. UreG subfamily. Homodimer. UreD, UreF and UreG form a complex that acts as a GTP-hydrolysis-dependent molecular chaperone, activating the urease apoprotein by helping to assemble the nickel containing metallocenter of UreC. The UreE protein probably delivers the nickel.

The protein resides in the cytoplasm. Functionally, facilitates the functional incorporation of the urease nickel metallocenter. This process requires GTP hydrolysis, probably effectuated by UreG. The sequence is that of Urease accessory protein UreG from Prochlorococcus marinus (strain AS9601).